Reading from the N-terminus, the 534-residue chain is DM7 family protein GE17491 (534 aa).

The protein belongs to the DM7 family.

In Drosophila yakuba (Fruit fly), this protein is DM7 family protein GE17491.